Reading from the N-terminus, the 1192-residue chain is Protein FAM83H (1192 aa).

Disordered stretches follow at residues 435-542 (EGMG…VKQG), 557-661 (DGGE…LAEP), 695-720 (SKLE…ESEP), 737-1082 (LSRE…SNII), and 1094-1145 (ILEQ…ERDN). Residues 437-447 (MGHDDRGHYDR) are compositionally biased toward basic and acidic residues. Composition is skewed to polar residues over residues 523-538 (QLFS…QDPS) and 629-652 (SDLG…ASST). Basic and acidic residues-rich tracts occupy residues 737 to 759 (LSRE…KHAS) and 768 to 789 (DTKE…EENK). Polar residues predominate over residues 790–810 (VTQPTVPSASQQITSSLNMND). Positions 820–834 (DQQEKRKTSKLELDL) are enriched in basic and acidic residues. Polar residues predominate over residues 861-878 (TSEQSTVKAQEPTVSQTD). Composition is skewed to basic and acidic residues over residues 880-892 (VPHR…KPKP) and 914-925 (APKKEPVKEPTK). Residues 926 to 946 (SLKPFPSPKFLKPFKSSQSSS) are compositionally biased toward low complexity. Positions 994–1005 (ESKDTKALDFLK) are enriched in basic and acidic residues. The span at 1068-1082 (KPTTSRYQSSTSNII) shows a compositional bias: polar residues. Over residues 1107–1122 (QQNEESGKGDGGKDDV) the composition is skewed to basic and acidic residues.

It belongs to the FAM83 family.

It is found in the cytoplasm. The protein localises to the cytoskeleton. Functionally, may play a role in keratin cytoskeleton disassembly. This Danio rerio (Zebrafish) protein is Protein FAM83H.